A 466-amino-acid polypeptide reads, in one-letter code: Myocardial zonula adherens protein (466 aa).

The span at 1–10 shows a compositional bias: polar residues; the sequence is MLRSTSTVTL. A signal peptide spans 1–16; it reads MLRSTSTVTLFSGGGA. The disordered stretch occupies residues 1 to 68; the sequence is MLRSTSTVTL…SNGESTKRLP (68 aa). Basic and acidic residues predominate over residues 45-55; that stretch reads TEKKIERKDQP. Coiled-coil stretches lie at residues 95–137 and 187–415; these read NQLK…QDLS and HIKD…LTET.

It belongs to the MYZAP family. Interacts with DSP, MPRIP and TJP1/ZO1. Interaction with MPRIP inhibits the activation of transcription factor SRF. Interacts with GRIN1. Interacts with DYNLL1. Detected in heart myocardium and lung.

It is found in the cytoplasm. It localises to the cytoskeleton. The protein localises to the cell membrane. Its subcellular location is the myofibril. The protein resides in the sarcomere. It is found in the i band. It localises to the z line. The protein localises to the cell junction. Functionally, plays a role in cellular signaling via Rho-related GTP-binding proteins and activation of transcription factor SRF. Targets TJP1 to cell junctions. In cortical neurons, may play a role in glutaminergic signal transduction through interaction with the NMDA receptor subunit GRIN1. This chain is Myocardial zonula adherens protein (Myzap), found in Mus musculus (Mouse).